The following is a 1613-amino-acid chain: NAD-specific glutamate dehydrogenase (1613 aa).

K849 is a catalytic residue.

It belongs to the Glu/Leu/Phe/Val dehydrogenases family.

The enzyme catalyses L-glutamate + NAD(+) + H2O = 2-oxoglutarate + NH4(+) + NADH + H(+). Its function is as follows. Involved in arginine catabolism by converting L-glutamate, into 2-oxoglutarate, which is then channeled into the tricarboxylic acid cycle. The sequence is that of NAD-specific glutamate dehydrogenase from Halomonas elongata (strain ATCC 33173 / DSM 2581 / NBRC 15536 / NCIMB 2198 / 1H9).